Reading from the N-terminus, the 707-residue chain is Transcription factor 12 (707 aa).

Residues 25–109 (AMFSPPVNSG…TPFMNSNLIG (85 aa)) form a disordered region. Polar residues-rich tracts occupy residues 30 to 48 (PVNS…QFSG) and 56 to 76 (GTTS…SRGF). 3 positions are modified to phosphoserine: Ser-47, Ser-67, and Ser-79. Residues 81 to 93 (HYSDHLNDSRLGT) are compositionally biased toward basic and acidic residues. Phosphoserine is present on Ser-98. Lys-110 is covalently cross-linked (Glycyl lysine isopeptide (Lys-Gly) (interchain with G-Cter in SUMO2)). Phosphoserine is present on residues Ser-116 and Ser-124. The segment at 119–140 (LYSRDSGLSGCQSSLLRQDLGL) is leucine-zipper. Disordered stretches follow at residues 140–222 (LGSP…SMFA) and 249–313 (FGGI…ASHT). A compositionally biased stretch (polar residues) spans 144–163 (AQLSSSGKPGTPYYSFSATS). Residue Lys-181 forms a Glycyl lysine isopeptide (Lys-Gly) (interchain with G-Cter in SUMO2) linkage. Residues 256–269 (STSHMSQSSSYGSL) show a composition bias toward low complexity. Positions 282-306 (VSPTDINTSLPPMSSFHRGSTSSSP) are enriched in polar residues. Position 313 is a phosphothreonine (Thr-313). At Ser-333 the chain carries Phosphoserine. 2 disordered regions span residues 349-393 (PDHT…YENS) and 521-605 (HKTP…ERRM). The segment covering 352–363 (TSSSFPSNPSTP) has biased composition (low complexity). Composition is skewed to polar residues over residues 364–377 (VGSP…TSQW) and 384–393 (APSSPSYENS). Basic and acidic residues-rich tracts occupy residues 543–555 (IKTE…ENLH) and 561–576 (DDMK…DIKV). A Glycyl lysine isopeptide (Lys-Gly) (interchain with G-Cter in SUMO2) cross-link involves residue Lys-544. A Phosphoserine modification is found at Ser-565. A Glycyl lysine isopeptide (Lys-Gly) (interchain with G-Cter in SUMO2) cross-link involves residue Lys-575. Position 582 is a phosphothreonine (Thr-582). Phosphoserine occurs at positions 583 and 584. Residues 593 to 605 (PEQKIEREKERRM) are compositionally biased toward basic and acidic residues. The bHLH domain occupies 602 to 655 (ERRMANNARERLRVRDINEAFKELGRMCQLHLKSEKPQTKLLILHQAVAVILSL). Residues Lys-634 and Lys-678 each participate in a glycyl lysine isopeptide (Lys-Gly) (interchain with G-Cter in SUMO2) cross-link. The tract at residues 657–680 (QQVRERNLNPKAACLKRREEEKVS) is class A specific domain. The tract at residues 675 to 707 (EEEKVSAASAEPPTTLPGTHPGLSETTNPMGHL) is disordered. A compositionally biased stretch (low complexity) spans 686–697 (PPTTLPGTHPGL). Polar residues predominate over residues 698–707 (SETTNPMGHL).

As to quaternary structure, efficient DNA binding requires dimerization with another bHLH protein. Forms homo- or heterooligomers with myogenin, E12 and ITF2 proteins. Interacts with PTF1. Interacts with RUNX1T1. Interacts with NEUROD2. Interacts with BHLHA9. As to expression, isoform gamma is highly expressed in lung, kidney, spleen, and is expressed at reduced levels in heart, muscle, liver, pituitary, brain and the trigeminal ganglion. The expression of isoform alpha predominates over isoform gamma in the pituitary and the brain.

Its subcellular location is the nucleus. Transcriptional regulator. Involved in the initiation of neuronal differentiation. Activates transcription by binding to the E box (5'-CANNTG-3'). May be involved in the functional network that regulates the development of the GnRH axis. This is Transcription factor 12 (Tcf12) from Rattus norvegicus (Rat).